We begin with the raw amino-acid sequence, 178 residues long: ATP synthase subunit delta (178 aa).

It belongs to the ATPase delta chain family. As to quaternary structure, F-type ATPases have 2 components, F(1) - the catalytic core - and F(0) - the membrane proton channel. F(1) has five subunits: alpha(3), beta(3), gamma(1), delta(1), epsilon(1). F(0) has three main subunits: a(1), b(2) and c(10-14). The alpha and beta chains form an alternating ring which encloses part of the gamma chain. F(1) is attached to F(0) by a central stalk formed by the gamma and epsilon chains, while a peripheral stalk is formed by the delta and b chains.

Its subcellular location is the cell membrane. F(1)F(0) ATP synthase produces ATP from ADP in the presence of a proton or sodium gradient. F-type ATPases consist of two structural domains, F(1) containing the extramembraneous catalytic core and F(0) containing the membrane proton channel, linked together by a central stalk and a peripheral stalk. During catalysis, ATP synthesis in the catalytic domain of F(1) is coupled via a rotary mechanism of the central stalk subunits to proton translocation. Functionally, this protein is part of the stalk that links CF(0) to CF(1). It either transmits conformational changes from CF(0) to CF(1) or is implicated in proton conduction. The chain is ATP synthase subunit delta from Streptococcus equinus (Streptococcus bovis).